Here is a 173-residue protein sequence, read N- to C-terminus: Ribulose bisphosphate carboxylase small subunit, chloroplastic 1 (173 aa).

The transit peptide at Met-1–Gln-49 directs the protein to the chloroplast.

This sequence belongs to the RuBisCO small chain family. In terms of assembly, heterohexadecamer of 8 large and 8 small subunits.

It localises to the plastid. It is found in the chloroplast. Functionally, ruBisCO catalyzes two reactions: the carboxylation of D-ribulose 1,5-bisphosphate, the primary event in carbon dioxide fixation, as well as the oxidative fragmentation of the pentose substrate. Both reactions occur simultaneously and in competition at the same active site. Although the small subunit is not catalytic it is essential for maximal activity. The protein is Ribulose bisphosphate carboxylase small subunit, chloroplastic 1 of Flaveria pringlei.